The following is a 400-amino-acid chain: Glycerol-3-phosphate dehydrogenase [NAD(+)] 1 (400 aa).

NAD(+) contacts are provided by residues 50 to 55, F138, K161, and A194; that span reads GSGNWG. K161 is a substrate binding site. K254 functions as the Proton acceptor in the catalytic mechanism. NAD(+)-binding residues include R319 and Q348. Position 319–320 (319–320) interacts with substrate; the sequence is RN.

It belongs to the NAD-dependent glycerol-3-phosphate dehydrogenase family.

The catalysed reaction is sn-glycerol 3-phosphate + NAD(+) = dihydroxyacetone phosphate + NADH + H(+). The polypeptide is Glycerol-3-phosphate dehydrogenase [NAD(+)] 1 (GPD1) (Candida glabrata (strain ATCC 2001 / BCRC 20586 / JCM 3761 / NBRC 0622 / NRRL Y-65 / CBS 138) (Yeast)).